The primary structure comprises 151 residues: Protein SprT-like (151 aa).

The 140-residue stretch at 7–146 (QSLTESIAIK…CGRCGGILKL (140 aa)) folds into the SprT-like domain. Zn(2+) is bound at residue His-67. Residue Glu-68 is part of the active site. Zn(2+) is bound at residue His-71.

Belongs to the SprT family. The cofactor is Zn(2+).

It localises to the cytoplasm. This chain is Protein SprT-like, found in Staphylococcus epidermidis (strain ATCC 35984 / DSM 28319 / BCRC 17069 / CCUG 31568 / BM 3577 / RP62A).